The following is a 291-amino-acid chain: Cilia- and flagella-associated protein 298 (291 aa).

Belongs to the CFAP298 family.

This is Cilia- and flagella-associated protein 298 from Drosophila melanogaster (Fruit fly).